Consider the following 79-residue polypeptide: CDC42 small effector protein 1-A (79 aa).

2 S-palmitoyl cysteine lipidation sites follow: Cys-10 and Cys-11. The CRIB domain maps to Ile-30–Gly-43.

This sequence belongs to the CDC42SE/SPEC family.

Its subcellular location is the cytoplasm. It is found in the cytoskeleton. The protein resides in the cell membrane. Probably involved in the organization of the actin cytoskeleton by acting downstream of CDC42, inducing actin filament assembly. The polypeptide is CDC42 small effector protein 1-A (cdc42se1-a) (Xenopus laevis (African clawed frog)).